The chain runs to 346 residues: Small ribosomal subunit biogenesis GTPase RsgA 1 (346 aa).

One can recognise a CP-type G domain in the interval 93–248 (AEQLIAANFD…VIDTPGMREF (156 aa)). Residues 138–141 (TKAD) and 190–198 (GSSGVGKSS) contribute to the GTP site. The Zn(2+) site is built by cysteine 271, cysteine 276, histidine 278, and cysteine 284.

The protein belongs to the TRAFAC class YlqF/YawG GTPase family. RsgA subfamily. In terms of assembly, monomer. Associates with 30S ribosomal subunit, binds 16S rRNA. Zn(2+) is required as a cofactor.

The protein resides in the cytoplasm. One of several proteins that assist in the late maturation steps of the functional core of the 30S ribosomal subunit. Helps release RbfA from mature subunits. May play a role in the assembly of ribosomal proteins into the subunit. Circularly permuted GTPase that catalyzes slow GTP hydrolysis, GTPase activity is stimulated by the 30S ribosomal subunit. This chain is Small ribosomal subunit biogenesis GTPase RsgA 1, found in Listeria monocytogenes serovar 1/2a (strain ATCC BAA-679 / EGD-e).